A 210-amino-acid chain; its full sequence is Riboflavin kinase (210 aa).

A compositionally biased stretch (pro residues) spans 1–11 (MRPSNPRPPVT). The tract at residues 1–24 (MRPSNPRPPVTGPDSGPEAPFPIR) is disordered. Residues Thr-44 and Asn-46 each coordinate Mg(2+). Glu-113 acts as the Nucleophile in catalysis.

The protein belongs to the flavokinase family. Zn(2+) serves as cofactor. Mg(2+) is required as a cofactor.

The catalysed reaction is riboflavin + ATP = FMN + ADP + H(+). It participates in cofactor biosynthesis; FMN biosynthesis; FMN from riboflavin (ATP route): step 1/1. Catalyzes the phosphorylation of riboflavin (vitamin B2) to form flavin mononucleotide (FMN) coenzyme. The protein is Riboflavin kinase (fmn1) of Emericella nidulans (strain FGSC A4 / ATCC 38163 / CBS 112.46 / NRRL 194 / M139) (Aspergillus nidulans).